The primary structure comprises 350 residues: tRNA uridine(34) hydroxylase (350 aa).

Residues 146–240 (DDPDALFIDM…YARKARDQGL (95 aa)) form the Rhodanese domain. Cysteine 200 acts as the Cysteine persulfide intermediate in catalysis.

It belongs to the TrhO family.

The enzyme catalyses uridine(34) in tRNA + AH2 + O2 = 5-hydroxyuridine(34) in tRNA + A + H2O. Functionally, catalyzes oxygen-dependent 5-hydroxyuridine (ho5U) modification at position 34 in tRNAs, the first step in 5-carboxymethoxyuridine (cmo5U) biosynthesis. May be part of an alternate pathway, which is able to bypass cmo5U biogenesis in a subset of tRNAs under aerobic conditions. The sequence is that of tRNA uridine(34) hydroxylase from Escherichia coli O6:K15:H31 (strain 536 / UPEC).